The chain runs to 541 residues: MTRFIFITGGVVSSLGKGLASAALGALLQARGFKVRLRKLDPYLNVDPGTMSPYQHGEVYVTDDGAETDLDLGHYERFTGVPSRKSDNITTGRIYSNVIAKERRGDYLGATVQVIPHVTDAIKEFVKSDLTDEDFCLCEIGGTVGDIESLPFLEAIRQLGNELGRARTMFVHLTLVPYIPSAGELKTKPTQHSVKELLSVGIQPDMLMCRCDREIPEGDRRKIALFCNVAPDAVIPALDVDSIYQVPISYHEQGMDAVVCRHFGLDAPLPDLKRWSTIVDRIRQPEGEVTIAIVGKYISLLDSYKSLAEALHHGGIANNVKVNLNWIDSQIFEQGDVVQHLEPCDGILVPGGFGERGAFGKVEAVRFARERKVPYFGICFGMQMAVIEAARNLAGYKDASSTEFGPCDNPVVGLMTEWMKGNMLEKRAASGDLGGTMRLGAYECDLKQGSRVREIYGQGRISERHRHRYEVNMGYRADLEKTGLSFSGLSPDGVLPEIVEIPDHPWFVGVQFHPELKSKPFDPHPLFTSFIAAAVRQSRLV.

The interval 1–265 (MTRFIFITGG…DAVVCRHFGL (265 aa)) is amidoligase domain. Ser-13 is a binding site for CTP. UTP is bound at residue Ser-13. 14 to 19 (SLGKGL) contributes to the ATP binding site. L-glutamine is bound at residue Tyr-54. Asp-71 serves as a coordination point for ATP. Residues Asp-71 and Glu-139 each contribute to the Mg(2+) site. Residues 146–148 (DIE), 186–191 (KTKPTQ), and Lys-222 contribute to the CTP site. UTP contacts are provided by residues 186–191 (KTKPTQ) and Lys-222. Positions 290–540 (TIAIVGKYIS…IAAAVRQSRL (251 aa)) constitute a Glutamine amidotransferase type-1 domain. Gly-352 lines the L-glutamine pocket. Cys-379 functions as the Nucleophile; for glutamine hydrolysis in the catalytic mechanism. L-glutamine-binding positions include 380–383 (FGMQ), Glu-403, and Arg-468. Residues His-513 and Glu-515 contribute to the active site.

Belongs to the CTP synthase family. Homotetramer.

It catalyses the reaction UTP + L-glutamine + ATP + H2O = CTP + L-glutamate + ADP + phosphate + 2 H(+). The catalysed reaction is L-glutamine + H2O = L-glutamate + NH4(+). The enzyme catalyses UTP + NH4(+) + ATP = CTP + ADP + phosphate + 2 H(+). Its pathway is pyrimidine metabolism; CTP biosynthesis via de novo pathway; CTP from UDP: step 2/2. Its activity is regulated as follows. Allosterically activated by GTP, when glutamine is the substrate; GTP has no effect on the reaction when ammonia is the substrate. The allosteric effector GTP functions by stabilizing the protein conformation that binds the tetrahedral intermediate(s) formed during glutamine hydrolysis. Inhibited by the product CTP, via allosteric rather than competitive inhibition. Functionally, catalyzes the ATP-dependent amination of UTP to CTP with either L-glutamine or ammonia as the source of nitrogen. Regulates intracellular CTP levels through interactions with the four ribonucleotide triphosphates. The polypeptide is CTP synthase (Paramagnetospirillum magneticum (strain ATCC 700264 / AMB-1) (Magnetospirillum magneticum)).